A 203-amino-acid chain; its full sequence is MEGSTSPKALRVAAISGSLRRGSANTGLIRAAKEICEESIPGMVIDHVDIPDLPLLNTDMEVDDGFPPAVEAFRASVRAADCFLFASPEYNYSISGPLKNALDWGSRPPNCWADRAAAIVSASGGSGGSRSMYHIRQVGVFLDIHFINKPEVFIKAHQPPKKFDSDGNLIDPEIKEELKDMLLSLQAFALRLQGKPANSKHAA.

This sequence belongs to the SsuE family. Homotetramer. FMN serves as cofactor.

It carries out the reaction a quinone + NADH + H(+) = a quinol + NAD(+). It catalyses the reaction a quinone + NADPH + H(+) = a quinol + NADP(+). Its function is as follows. The enzyme apparently serves as a quinone reductase in connection with conjugation reactions of hydroquinones involved in detoxification pathways. The protein is Probable NADPH:quinone oxidoreductase 2 of Oryza sativa subsp. japonica (Rice).